A 431-amino-acid chain; its full sequence is MTVKTEAARGPLTYSRMRGMVAILIAFMKQRRMGLNDFIQKIANNSYACKHTEVQSILKISQPQEPELMNANPSPPPSPSQQINLGPSSNPHAKPSDFHFLKVIGKGSFGKVLLARHKAEEAFYAVKVLQKKAILKKKEEKHIMSERNVLLKNVKHPFLVGLHFSFQTADKLYFVLDYINGGELFYHLQRERCFLEPRARFYAAEIASALGYLHSLNIVYRDLKPENILLDSQGHIVLTDFGLCKENIEHNGTTSTFCGTPEYLAPEVLHKQPYDRTVDWWCLGAVLYEMLYGLPPFYSRNTAEMYDNILNKPLQLKPNITNSARHLLEGLLQKDRTKRLGAKDDFMEIRNHVFFSLINWDDLINKKITPPFNPNVSGPSDLRHFDPEFTEEPVPSSIGRSPDSILITASVKEAAEAFLGFSYAPPMDSFL.

Positions Met-1 to Ile-60 are necessary for localization to the mitochondria. The tract at residues Pro-66 to His-92 is disordered. The residue at position 74 (Ser-74) is a Phosphoserine. Ser-78 carries the phosphoserine; by MAPK7 modification. A compositionally biased stretch (polar residues) spans Gln-81–Pro-91. Residues Phe-98–Phe-355 form the Protein kinase domain. ATP-binding positions include Ile-104–Val-112 and Lys-127. The Nuclear localization signal signature appears at Lys-131–Lys-141. Asp-222 acts as the Proton acceptor in catalysis. Thr-256 is modified (phosphothreonine; by PDPK1). An AGC-kinase C-terminal domain is found at Ser-356–Leu-431. Thr-369 is modified (phosphothreonine; by PKA). Residues Ser-397, Ser-401, and Ser-422 each carry the phosphoserine modification.

The protein belongs to the protein kinase superfamily. AGC Ser/Thr protein kinase family. As to quaternary structure, homodimer; disulfide-linked. Forms a trimeric complex with FBXW7 and NOTCH1. Interacts with MAPK3/ERK1, MAPK1/ERK2, MAP2K1/MEK1, MAP2K2/MEK2, NEDD4, NEDD4L, MAPT/TAU, MAPK7, CREB1, SLC9A3R2/NHERF2 and KCNJ1/ROMK1. Associates with the mammalian target of rapamycin complex 2 (mTORC2) via an interaction with MAPKAP1/SIN1. Regulated by phosphorylation. Activated by phosphorylation on Ser-422 by mTORC2, transforming it into a substrate for PDPK1 which phosphorylates it on Thr-256. Phosphorylation on Ser-397 and Ser-401 are also essential for its activity. Phosphorylation on Ser-78 by MAPK7 is required for growth factor-induced cell cycle progression. In terms of processing, ubiquitinated by NEDD4L; which promotes proteasomal degradation. Ubiquitinated by SYVN1 at the endoplasmic reticulum; which promotes rapid proteasomal degradation and maintains a high turnover rate in resting cells.

The protein resides in the cytoplasm. It is found in the nucleus. The protein localises to the endoplasmic reticulum membrane. It localises to the cell membrane. Its subcellular location is the mitochondrion. The enzyme catalyses L-seryl-[protein] + ATP = O-phospho-L-seryl-[protein] + ADP + H(+). It carries out the reaction L-threonyl-[protein] + ATP = O-phospho-L-threonyl-[protein] + ADP + H(+). Two specific sites, one in the kinase domain (Thr-256) and the other in the C-terminal regulatory region (Ser-422), need to be phosphorylated for its full activation. Phosphorylation at Ser-397 and Ser-401 are also essential for its activity. Activated by WNK1, WNK2, WNK3 and WNK4; which promote phosphorylation by mTORC2. Its function is as follows. Serine/threonine-protein kinase which is involved in the regulation of a wide variety of ion channels, membrane transporters, cellular enzymes, transcription factors, neuronal excitability, cell growth, proliferation, survival, migration and apoptosis. Plays an important role in cellular stress response. Contributes to regulation of renal Na(+) retention, renal K(+) elimination, salt appetite, gastric acid secretion, intestinal Na(+)/H(+) exchange and nutrient transport, insulin-dependent salt sensitivity of blood pressure, salt sensitivity of peripheral glucose uptake, cardiac repolarization and memory consolidation. Up-regulates Na(+) channels: SCNN1A/ENAC, SCN5A and ASIC1/ACCN2, K(+) channels: KCNJ1/ROMK1, KCNA1-5, KCNQ1-5 and KCNE1, epithelial Ca(2+) channels: TRPV5 and TRPV6, chloride channels: BSND, CLCN2 and CFTR, glutamate transporters: SLC1A3/EAAT1, SLC1A2 /EAAT2, SLC1A1/EAAT3, SLC1A6/EAAT4 and SLC1A7/EAAT5, amino acid transporters: SLC1A5/ASCT2, SLC38A1/SN1 and SLC6A19, creatine transporter: SLC6A8, Na(+)/dicarboxylate cotransporter: SLC13A2/NADC1, Na(+)-dependent phosphate cotransporter: SLC34A2/NAPI-2B, glutamate receptor: GRIK2/GLUR6. Up-regulates carriers: SLC9A3/NHE3, SLC12A1/NKCC2, SLC12A3/NCC, SLC5A3/SMIT, SLC2A1/GLUT1, SLC5A1/SGLT1 and SLC15A2/PEPT2. Regulates enzymes: GSK3A/B, PMM2 and Na(+)/K(+) ATPase, and transcription factors: CTNNB1 and nuclear factor NF-kappa-B. Stimulates sodium transport into epithelial cells by enhancing the stability and expression of SCNN1A/ENAC. This is achieved by phosphorylating the NEDD4L ubiquitin E3 ligase, promoting its interaction with 14-3-3 proteins, thereby preventing it from binding to SCNN1A/ENAC and targeting it for degradation. Regulates store-operated Ca(+2) entry (SOCE) by stimulating ORAI1 and STIM1. Regulates KCNJ1/ROMK1 directly via its phosphorylation or indirectly via increased interaction with SLC9A3R2/NHERF2. Phosphorylates MDM2 and activates MDM2-dependent ubiquitination of p53/TP53. Phosphorylates MAPT/TAU and mediates microtubule depolymerization and neurite formation in hippocampal neurons. Phosphorylates SLC2A4/GLUT4 and up-regulates its activity. Phosphorylates APBB1/FE65 and promotes its localization to the nucleus. Phosphorylates MAPK1/ERK2 and activates it by enhancing its interaction with MAP2K1/MEK1 and MAP2K2/MEK2. Phosphorylates FBXW7 and plays an inhibitory role in the NOTCH1 signaling. Phosphorylates FOXO1 resulting in its relocalization from the nucleus to the cytoplasm. Phosphorylates FOXO3, promoting its exit from the nucleus and interference with FOXO3-dependent transcription. Phosphorylates BRAF and MAP3K3/MEKK3 and inhibits their activity. Phosphorylates SLC9A3/NHE3 in response to dexamethasone, resulting in its activation and increased localization at the cell membrane. Phosphorylates CREB1. Necessary for vascular remodeling during angiogenesis. This is Serine/threonine-protein kinase Sgk1 (SGK1) from Oryctolagus cuniculus (Rabbit).